Reading from the N-terminus, the 156-residue chain is Large ribosomal subunit protein uL23 (156 aa).

The segment covering 1-19 (MAPKAKKEAPAPPKVEAKA) has biased composition (basic and acidic residues). Residues 1–67 (MAPKAKKEAP…PKYPRKSAPR (67 aa)) form a disordered region. Position 2 is a n,N,N-trimethylalanine (A2). A Glycyl lysine isopeptide (Lys-Gly) (interchain with G-Cter in SUMO2) cross-link involves residue K14. Over residues 20–67 (KALKAKKAVLKGVHSHKKKKIRTSPTFRRPKTLRLRRQPKYPRKSAPR) the composition is skewed to basic residues. The interval 32–74 (VHSHKKKKIRTSPTFRRPKTLRLRRQPKYPRKSAPRRNKLDHY) is beta-like import receptor binding (BIB) domain. R41 is modified (citrulline). Residue S43 is modified to Phosphoserine. T45 carries the post-translational modification Phosphothreonine. An N6-acetyllysine modification is found at K70.

It belongs to the universal ribosomal protein uL23 family. In terms of assembly, component of the large ribosomal subunit. Interacts with LYAR and GNL2. Interacts with MDM2; this interaction may promote MDM2-mediated p53/TP53 polyubiquitination. Directly interacts (via BIB domain) with IPO5, IPO7, KPNB1 and TNPO1; these interactions are involved in RPL23A nuclear import for the assembly of ribosomal subunits. Interacts with IPO8. Post-translationally, N-terminus is methylated by METTL11A/NTM1. Citrullinated by PADI4.

The protein localises to the cytoplasm. It is found in the nucleus. In terms of biological role, component of the large ribosomal subunit. The ribosome is a large ribonucleoprotein complex responsible for the synthesis of proteins in the cell. Binds a specific region on the 26S rRNA. May promote p53/TP53 degradation possibly through the stimulation of MDM2-mediated TP53 polyubiquitination. The sequence is that of Large ribosomal subunit protein uL23 (RPL23A) from Oryctolagus cuniculus (Rabbit).